A 559-amino-acid polypeptide reads, in one-letter code: MSHPVENVVAAENTEKRPTNFIRQIIDEDLASGKHTGVQTRFPPEPNGYLHIGHAKSICLNFGIAEDYQGLCNLRFDDTNPVKEDVEYVDSIKQDVEWLGFKWEGEPRYASDYFDQLYGYAIELIEKGLAYVDELSPEEMREYRGTLTEPGKNSPYRDRSIEENLALFEKMKNGEIAEGKACLRAKIDMASPFIVMRDPVIYRIKFATHHQTGDKWCIYPMYDFTHCISDAIERITHSLCTLEFQDNRRLYDWVLENISIARPLPHQYEFSRLNLESTLTSKRKLLQLVNEGIVDGWNDPRMPTISGLRRRGYTPASLREFCRRIGVTKQDNMVEFSALEACIREDLNENAPRAMAVINPLKIVIENFSGKEMLTAPNHPNRDELGVRELPFTRELYIDQADFREEANKQYKRLVLGKEVRLRNAYVIKAERVEKDAEENITTVYCTYDPDTLGKNPADGRKVKGVIQWVSAEDYLPAEFRQYGRLFTVANPGAAEDIHQVLNPDSLVIKQGVVEKSLANAQPEKAYQFEREGYYCADSKDSRPDHLVFNLTVSLKEGF.

A 'HIGH' region motif is present at residues 44-54 (PEPNGYLHIGH). ATP is bound by residues 45-47 (EPN) and 51-57 (HIGHAKS). 2 residues coordinate L-glutamine: D77 and Y222. Residues T241 and 272–273 (RL) each bind ATP. The 'KMSKS' region signature appears at 279–283 (LTSKR).

The protein belongs to the class-I aminoacyl-tRNA synthetase family. In terms of assembly, monomer.

The protein resides in the cytoplasm. It carries out the reaction tRNA(Gln) + L-glutamine + ATP = L-glutaminyl-tRNA(Gln) + AMP + diphosphate. In Pasteurella multocida (strain Pm70), this protein is Glutamine--tRNA ligase.